The chain runs to 245 residues: Octopine transport system permease protein OccM (245 aa).

A run of 5 helical transmembrane segments spans residues phenylalanine 12–leucine 32, phenylalanine 57–glycine 77, alanine 96–methionine 116, isoleucine 163–isoleucine 183, and isoleucine 204–tryptophan 224. Residues isoleucine 19–phenylalanine 216 enclose the ABC transmembrane type-1 domain.

This sequence belongs to the binding-protein-dependent transport system permease family. HisMQ subfamily.

It localises to the cell inner membrane. Component of the octopine active transport system probably consisting of four subunits: Q, M, P and T. This is Octopine transport system permease protein OccM (occM) from Rhizobium radiobacter (Agrobacterium tumefaciens).